We begin with the raw amino-acid sequence, 561 residues long: Oligo-1,6-glucosidase 1 (561 aa).

Ca(2+)-binding residues include D20, N22, D24, F26, and D28. The Nucleophile role is filled by D199. The active-site Proton donor is E255.

It belongs to the glycosyl hydrolase 13 family.

It localises to the cytoplasm. It carries out the reaction Hydrolysis of (1-&gt;6)-alpha-D-glucosidic linkages in some oligosaccharides produced from starch and glycogen by alpha-amylase, and in isomaltose.. Functionally, hydrolyzes various disaccharides such as sucrose, maltose, and isomaltose with different efficiencies. Also hydrolyzes longer maltodextrins from maltotriose up to maltohexaose, but not maltoheptaose, palatinose, isomaltotriose, or isomaltotetraose. This Bacillus subtilis (strain 168) protein is Oligo-1,6-glucosidase 1 (malL).